The following is a 475-amino-acid chain: Cytochrome c-552 (475 aa).

The N-terminal stretch at 1–29 (MSIKHWMSAPIAVATLFASQLLLAGSVLA) is a signal peptide. The tract at residues 38-57 (PRNDAFEQKHPDQYHSWKAT) is disordered. His92 is a heme c binding site. Positions 120, 123, and 124 each coordinate heme. Positions 158, 161, 162, 207, 210, and 211 each coordinate heme c. Positions 213, 214, 259, and 261 each coordinate Ca(2+). Tyr214 contacts substrate. His262 serves as a coordination point for substrate. Residues His273, Cys280, Cys283, His284, His299, Cys312, Cys315, His316, and His391 each contribute to the heme c site.

The protein belongs to the cytochrome c-552 family. It depends on Ca(2+) as a cofactor. Heme c serves as cofactor.

The protein localises to the periplasm. The catalysed reaction is 6 Fe(III)-[cytochrome c] + NH4(+) + 2 H2O = 6 Fe(II)-[cytochrome c] + nitrite + 8 H(+). The protein operates within nitrogen metabolism; nitrate reduction (assimilation). Its function is as follows. Catalyzes the reduction of nitrite to ammonia, consuming six electrons in the process. This is Cytochrome c-552 from Vibrio parahaemolyticus serotype O3:K6 (strain RIMD 2210633).